A 499-amino-acid polypeptide reads, in one-letter code: Alpha-amylase A type-3 (499 aa).

An N-terminal signal peptide occupies residues 1–21 (MMVAWWSLFLYGLQVAAPALA). Cys51 and Cys59 are oxidised to a cystine. Trp104 serves as a coordination point for substrate. Asn142 contacts Ca(2+). His143 serves as a coordination point for substrate. Cys171 and Cys185 are oxidised to a cystine. Ca(2+) is bound by residues Glu183 and Asp196. A glycan (N-linked (GlcNAc...) asparagine) is linked at Asn218. Residue Arg225 participates in substrate binding. 3 residues coordinate Ca(2+): Asp227, His231, and Glu251. Catalysis depends on Asp227, which acts as the Nucleophile. 230-231 (KH) is a substrate binding site. The active-site Proton donor is Glu251. Residue Gly255 participates in substrate binding. Cys261 and Cys304 are oxidised to a cystine. Arg365 lines the substrate pocket. The cysteines at positions 461 and 496 are disulfide-linked.

The protein belongs to the glycosyl hydrolase 13 family. Monomer. Ca(2+) serves as cofactor.

Its subcellular location is the secreted. It catalyses the reaction Endohydrolysis of (1-&gt;4)-alpha-D-glucosidic linkages in polysaccharides containing three or more (1-&gt;4)-alpha-linked D-glucose units.. The chain is Alpha-amylase A type-3 (amy3) from Aspergillus oryzae (strain ATCC 42149 / RIB 40) (Yellow koji mold).